Consider the following 264-residue polypeptide: S-adenosylmethionine decarboxylase proenzyme (264 aa).

S112 (schiff-base intermediate with substrate; via pyruvic acid) is an active-site residue. Position 112 is a pyruvic acid (Ser); by autocatalysis (S112). The Proton acceptor; for processing activity role is filled by H117. Residue C140 is the Proton donor; for catalytic activity of the active site.

Belongs to the prokaryotic AdoMetDC family. Type 2 subfamily. As to quaternary structure, heterooctamer of four alpha and four beta chains arranged as a tetramer of alpha/beta heterodimers. Requires pyruvate as cofactor. Is synthesized initially as an inactive proenzyme. Formation of the active enzyme involves a self-maturation process in which the active site pyruvoyl group is generated from an internal serine residue via an autocatalytic post-translational modification. Two non-identical subunits are generated from the proenzyme in this reaction, and the pyruvate is formed at the N-terminus of the alpha chain, which is derived from the carboxyl end of the proenzyme. The post-translation cleavage follows an unusual pathway, termed non-hydrolytic serinolysis, in which the side chain hydroxyl group of the serine supplies its oxygen atom to form the C-terminus of the beta chain, while the remainder of the serine residue undergoes an oxidative deamination to produce ammonia and the pyruvoyl group blocking the N-terminus of the alpha chain.

It carries out the reaction S-adenosyl-L-methionine + H(+) = S-adenosyl 3-(methylsulfanyl)propylamine + CO2. It participates in amine and polyamine biosynthesis; S-adenosylmethioninamine biosynthesis; S-adenosylmethioninamine from S-adenosyl-L-methionine: step 1/1. Its function is as follows. Catalyzes the decarboxylation of S-adenosylmethionine to S-adenosylmethioninamine (dcAdoMet), the propylamine donor required for the synthesis of the polyamines spermine and spermidine from the diamine putrescine. The chain is S-adenosylmethionine decarboxylase proenzyme from Salmonella gallinarum (strain 287/91 / NCTC 13346).